The sequence spans 167 residues: SAR-endolysin (167 aa).

Residues 10-32 (SVMAAISGGAIAIASVLITGPGG) traverse the membrane as a helical; Signal-anchor for type II membrane protein segment. Active-site proton donor/acceptor residues include Glu-37 and Asp-46.

It belongs to the glycosyl hydrolase 24 family.

It localises to the host cell inner membrane. The enzyme catalyses Hydrolysis of (1-&gt;4)-beta-linkages between N-acetylmuramic acid and N-acetyl-D-glucosamine residues in a peptidoglycan and between N-acetyl-D-glucosamine residues in chitodextrins.. Functionally, signal-arrest-release (SAR) endolysin with lysozyme activity that degrades host peptidoglycans and participates with the pinholin and spanin proteins in the sequential events which lead to programmed host cell lysis releasing the mature viral particles. Once the pinholin has permeabilized the host cell membrane, the SAR-endolysin is released into the periplasm where it breaks down the peptidoglycan layer. The polypeptide is SAR-endolysin (19) (Bacteriophage PS119).